The primary structure comprises 200 residues: Imidazoleglycerol-phosphate dehydratase (200 aa).

Belongs to the imidazoleglycerol-phosphate dehydratase family.

It localises to the cytoplasm. It carries out the reaction D-erythro-1-(imidazol-4-yl)glycerol 3-phosphate = 3-(imidazol-4-yl)-2-oxopropyl phosphate + H2O. It functions in the pathway amino-acid biosynthesis; L-histidine biosynthesis; L-histidine from 5-phospho-alpha-D-ribose 1-diphosphate: step 6/9. The chain is Imidazoleglycerol-phosphate dehydratase from Chlorobium luteolum (strain DSM 273 / BCRC 81028 / 2530) (Pelodictyon luteolum).